The chain runs to 388 residues: Chaperone protein DnaJ (388 aa).

The J domain occupies 4–69 (DYYDILGVDE…EKRQRYDQFG (66 aa)). Basic and acidic residues-rich tracts occupy residues 27–50 (KAME…KEAS), 58–73 (DPEK…HDGV), and 113–124 (GRSERGRGRPGS). 2 disordered regions span residues 27 to 86 (KAME…GRGR) and 99 to 125 (SDIF…PGSD). The CR-type zinc-finger motif lies at 140–225 (GTEKNLRLQK…CGGEGRVQGE (86 aa)). The Zn(2+) site is built by cysteine 153, cysteine 156, cysteine 173, cysteine 176, cysteine 199, cysteine 202, cysteine 213, and cysteine 216. CXXCXGXG motif repeat units lie at residues 153–160 (CESCDGTG), 173–180 (CPKCDGTG), 199–206 (CPRCEGEG), and 213–220 (CDDCGGEG). Basic and acidic residues predominate over residues 362–376 (AHDNFQPRPPEEDTQ). The disordered stretch occupies residues 362-388 (AHDNFQPRPPEEDTQKSFFRRVSDVFS).

It belongs to the DnaJ family. In terms of assembly, homodimer. Zn(2+) serves as cofactor.

The protein localises to the cytoplasm. Functionally, participates actively in the response to hyperosmotic and heat shock by preventing the aggregation of stress-denatured proteins and by disaggregating proteins, also in an autonomous, DnaK-independent fashion. Unfolded proteins bind initially to DnaJ; upon interaction with the DnaJ-bound protein, DnaK hydrolyzes its bound ATP, resulting in the formation of a stable complex. GrpE releases ADP from DnaK; ATP binding to DnaK triggers the release of the substrate protein, thus completing the reaction cycle. Several rounds of ATP-dependent interactions between DnaJ, DnaK and GrpE are required for fully efficient folding. Also involved, together with DnaK and GrpE, in the DNA replication of plasmids through activation of initiation proteins. This Salinibacter ruber (strain DSM 13855 / M31) protein is Chaperone protein DnaJ.